Reading from the N-terminus, the 342-residue chain is Cell division protein ZipA (342 aa).

Topologically, residues 1 to 6 are periplasmic; it reads MEDLQL. A helical transmembrane segment spans residues 7-27; sequence VLFILGAIAIVAVLVHGFWSI. Residues 28-342 lie on the Cytoplasmic side of the membrane; the sequence is RRQQPKSLKD…DYLHRIRANA (315 aa). A disordered region spans residues 33-57; the sequence is KSLKDSPMGNFYKQQADKESPPKRV. Over residues 47-57 the composition is skewed to basic and acidic residues; the sequence is QADKESPPKRV.

This sequence belongs to the ZipA family. In terms of assembly, interacts with FtsZ via their C-terminal domains.

The protein localises to the cell inner membrane. Functionally, essential cell division protein that stabilizes the FtsZ protofilaments by cross-linking them and that serves as a cytoplasmic membrane anchor for the Z ring. Also required for the recruitment to the septal ring of downstream cell division proteins. This is Cell division protein ZipA from Shewanella sp. (strain W3-18-1).